A 345-amino-acid chain; its full sequence is MLHSNIYSLQTEATNKILSTSSLEELESLRLYYFGKSGVITACLRSISTINNIEERKSIGSAVNSICAELKSLMNSQKEKLHKIQIDAQLMEDKIDISLPVRPKQIAKLHPISKTLHEVKHIFVSLGFKLSDGPELEDEFHVFDALNTHKHHPAREENDTFYLKKLVNNKRIVLRTHTSSVQIRTMESNNGNYPIKIIAPGKVYRNDWDATHSPMFHQIEGLYIDKNINMGHLKYCINYFLKKFFGENIQIRFRNSYFPFTEPSAEVDIKCSQKNWMEILGCGMVHHNVLTNVNINPEQYSGFAFGIGIERIAMIKYNINDLRKFYSNKLQWLTHHGFCFTNLIT.

A Mg(2+)-binding site is contributed by Glu-262.

It belongs to the class-II aminoacyl-tRNA synthetase family. Phe-tRNA synthetase alpha subunit type 1 subfamily. As to quaternary structure, tetramer of two alpha and two beta subunits. Mg(2+) serves as cofactor.

The protein resides in the cytoplasm. It carries out the reaction tRNA(Phe) + L-phenylalanine + ATP = L-phenylalanyl-tRNA(Phe) + AMP + diphosphate + H(+). This chain is Phenylalanine--tRNA ligase alpha subunit, found in Ehrlichia canis (strain Jake).